We begin with the raw amino-acid sequence, 490 residues long: Betaine aldehyde dehydrogenase (490 aa).

The K(+) site is built by threonine 26, isoleucine 27, and aspartate 93. Residue glycine 150–tryptophan 152 coordinates NAD(+). Lysine 162 functions as the Charge relay system in the catalytic mechanism. Residue lysine 176–glutamate 179 participates in NAD(+) binding. Valine 180 serves as a coordination point for K(+). Glycine 230–serine 233 is an NAD(+) binding site. Leucine 246 lines the K(+) pocket. Residue glutamate 252 is the Proton acceptor of the active site. 3 residues coordinate NAD(+): glycine 254, cysteine 286, and glutamate 387. Cysteine 286 functions as the Nucleophile in the catalytic mechanism. The residue at position 286 (cysteine 286) is a Cysteine sulfenic acid (-SOH). The K(+) site is built by lysine 457 and glycine 460. Catalysis depends on glutamate 464, which acts as the Charge relay system.

It belongs to the aldehyde dehydrogenase family. In terms of assembly, dimer of dimers. It depends on K(+) as a cofactor.

It catalyses the reaction betaine aldehyde + NAD(+) + H2O = glycine betaine + NADH + 2 H(+). The protein operates within amine and polyamine biosynthesis; betaine biosynthesis via choline pathway; betaine from betaine aldehyde: step 1/1. In terms of biological role, involved in the biosynthesis of the osmoprotectant glycine betaine. Catalyzes the irreversible oxidation of betaine aldehyde to the corresponding acid. The polypeptide is Betaine aldehyde dehydrogenase (Escherichia coli (strain SE11)).